The primary structure comprises 182 residues: Gamma-crystallin N (182 aa).

3 Beta/gamma crystallin 'Greek key' domains span residues 6 to 46 (GKIT…HVES), 47 to 89 (GAWV…RPVG), and 95 to 136 (FRLE…KVYG). A disordered region spans residues 153 to 182 (LSSSLQSDQGPEEATTKPATTQPPFLTANL). Residues 169–182 (KPATTQPPFLTANL) show a composition bias toward polar residues.

It belongs to the beta/gamma-crystallin family. As to quaternary structure, monomer. Not specifically expressed in eye.

The sequence is that of Gamma-crystallin N from Homo sapiens (Human).